Reading from the N-terminus, the 355-residue chain is Polyferredoxin protein FwdF (355 aa).

4Fe-4S ferredoxin-type domains lie at 24–53, 64–93, 108–137, 147–176, 187–216, 235–264, 267–296, and 304–333; these read RELCWNDELCVGCGICADICPVNAIAMGPL, PKLDIDKDVCVLCGMCASACPFDALDLKIN, RDIKVYQDKCVLCEQCEMVCPQGAIVVERE, GEININKEKCVLCGICAEYCPADAINLKYN, TDIEVDKDKCVFCKVCEFVCPHDAIEVICY, GKTVIDKDACVTCGWCAFICPAEAIEVEKP, GELIIDVNACNACGACISICPCSALEFPKP, and PRIIVNQNLCVLCGACAKACPVNAIKVKRT. The [4Fe-4S] cluster site is built by Cys33, Cys36, Cys39, Cys43, Cys73, Cys76, Cys79, Cys83, Cys117, Cys120, Cys123, Cys127, Cys156, Cys159, Cys162, Cys166, Cys196, Cys199, Cys202, Cys206, Cys244, Cys247, Cys250, Cys254, Cys276, Cys279, Cys282, Cys286, Cys313, Cys316, Cys319, and Cys323.

Requires [4Fe-4S] cluster as cofactor.

The sequence is that of Polyferredoxin protein FwdF (fwdF) from Methanocaldococcus jannaschii (strain ATCC 43067 / DSM 2661 / JAL-1 / JCM 10045 / NBRC 100440) (Methanococcus jannaschii).